The primary structure comprises 1052 residues: CCAAT/enhancer-binding protein zeta (1052 aa).

Disordered regions lie at residues 1–40 (MSADQEPVAFLAKQPWRPKQVTEDPDEEDEEDGDEGKNGF), 122–158 (VENKKQKATEGKKTSEKKVKNKTVAEQRPESCPVSKA), and 621–677 (SQLD…AEKP). A compositionally biased stretch (acidic residues) spans 23 to 34 (EDPDEEDEEDGD). Over residues 122–150 (VENKKQKATEGKKTSEKKVKNKTVAEQRP) the composition is skewed to basic and acidic residues. The span at 627–643 (PESDEENFVDVGDDSDD) shows a compositional bias: acidic residues. Serine 629 and serine 641 each carry phosphoserine. The segment covering 644–677 (EKFTDADKGTATDAVKEVESKETEPESSAEAEKP) has biased composition (basic and acidic residues). Serine 837 is modified (phosphoserine). The interval 876–969 (KGAKADLEDS…QGQKKKKKSF (94 aa)) is disordered. Over residues 883–932 (EDSESSDGELGDLDDDEVSLGSMNDEDFEIDEDGGTFMDVSDDESEDAPE) the composition is skewed to acidic residues. Residues serine 958, serine 972, and serine 977 each carry the phosphoserine modification. Residues 1032–1052 (KKKKNFRKKMKAPQKPKRQRK) form a disordered region.

The protein belongs to the CBF/MAK21 family. As to expression, ubiquitous.

The protein resides in the nucleus. In terms of biological role, stimulates transcription from the HSP70 promoter. This is CCAAT/enhancer-binding protein zeta (Cebpz) from Mus musculus (Mouse).